The sequence spans 662 residues: ATP-dependent zinc metalloprotease YME1 homolog (662 aa).

206-213 contacts ATP; it reads GPPGVGKT. His425 serves as a coordination point for Zn(2+). Glu426 is a catalytic residue. The Zn(2+) site is built by His429 and Asp503.

In the N-terminal section; belongs to the AAA ATPase family. The protein in the C-terminal section; belongs to the peptidase M41 family. Zn(2+) is required as a cofactor.

Putative ATP-dependent protease. In Schistosoma mansoni (Blood fluke), this protein is ATP-dependent zinc metalloprotease YME1 homolog.